The primary structure comprises 216 residues: Ribonuclease HII (216 aa).

The region spanning 33–216 is the RNase H type-2 domain; sequence WPVAGADEAG…RMSFRPFRQL (184 aa). 3 residues coordinate a divalent metal cation: aspartate 39, glutamate 40, and aspartate 130.

It belongs to the RNase HII family. It depends on Mn(2+) as a cofactor. Mg(2+) serves as cofactor.

It is found in the cytoplasm. It catalyses the reaction Endonucleolytic cleavage to 5'-phosphomonoester.. Functionally, endonuclease that specifically degrades the RNA of RNA-DNA hybrids. This Sinorhizobium medicae (strain WSM419) (Ensifer medicae) protein is Ribonuclease HII.